The primary structure comprises 792 residues: Protocadherin beta-18 (792 aa).

Residues 1 to 26 (MAARGSCVSRQRQVLFLFLLGGLCLA) form the signal peptide. Cadherin domains follow at residues 27–133 (GSEL…SPIF), 134–242 (QDKK…APQF), 243–347 (PQEL…APEL), 348–451 (IMSS…APAF), 452–561 (NQTS…APFV), and 568–676 (ASAP…LPEV). N-linked (GlcNAc...) asparagine glycosylation is present at asparagine 169. N-linked (GlcNAc...) asparagine glycans are attached at residues asparagine 418 and asparagine 452. Residues 693–713 (VIALASVSSLFLLSVLLFVGV) form a helical membrane-spanning segment.

The protein localises to the cell membrane. Functionally, potential calcium-dependent cell-adhesion protein. The polypeptide is Protocadherin beta-18 (Pcdhb18) (Mus musculus (Mouse)).